The primary structure comprises 291 residues: Shikimate dehydrogenase (NADP(+)) (291 aa).

Shikimate contacts are provided by residues 22–24 and Thr-69; that span reads SLS. The Proton acceptor role is filled by Lys-73. Shikimate contacts are provided by Asn-94 and Asp-110. NADP(+)-binding positions include 131–135 and Leu-226; that span reads GSGGA. Tyr-228 contributes to the shikimate binding site. Gly-249 serves as a coordination point for NADP(+).

This sequence belongs to the shikimate dehydrogenase family. Homodimer.

It carries out the reaction shikimate + NADP(+) = 3-dehydroshikimate + NADPH + H(+). It functions in the pathway metabolic intermediate biosynthesis; chorismate biosynthesis; chorismate from D-erythrose 4-phosphate and phosphoenolpyruvate: step 4/7. Its function is as follows. Involved in the biosynthesis of the chorismate, which leads to the biosynthesis of aromatic amino acids. Catalyzes the reversible NADPH linked reduction of 3-dehydroshikimate (DHSA) to yield shikimate (SA). This chain is Shikimate dehydrogenase (NADP(+)), found in Synechococcus sp. (strain JA-3-3Ab) (Cyanobacteria bacterium Yellowstone A-Prime).